The sequence spans 125 residues: MARIAGIDLPNNKQLQIALTSIYGIGRARALEICEKTGVLPDKRAKELDNDEVNKLRKIIESDYVVEGKLRSELAMSIKRLMDIACYRGLRHRKGLPLRGQRTKTNARTRKGKRKTVANKKMASK.

Residues 97 to 125 (PLRGQRTKTNARTRKGKRKTVANKKMASK) are disordered.

The protein belongs to the universal ribosomal protein uS13 family. As to quaternary structure, part of the 30S ribosomal subunit. Forms a loose heterodimer with protein S19. Forms two bridges to the 50S subunit in the 70S ribosome.

Located at the top of the head of the 30S subunit, it contacts several helices of the 16S rRNA. In the 70S ribosome it contacts the 23S rRNA (bridge B1a) and protein L5 of the 50S subunit (bridge B1b), connecting the 2 subunits; these bridges are implicated in subunit movement. Contacts the tRNAs in the A and P-sites. In Borrelia hermsii (strain HS1 / DAH), this protein is Small ribosomal subunit protein uS13.